The chain runs to 359 residues: Protein Wnt-5b (359 aa).

The first 17 residues, methionine 1–alanine 17, serve as a signal peptide directing secretion. Residues cysteine 83 and cysteine 94 are joined by a disulfide bond. 2 N-linked (GlcNAc...) asparagine glycosylation sites follow: asparagine 93 and asparagine 99. Disulfide bonds link cysteine 133/cysteine 141, cysteine 143/cysteine 161, cysteine 217/cysteine 231, cysteine 219/cysteine 226, cysteine 288/cysteine 319, cysteine 304/cysteine 314, cysteine 318/cysteine 358, cysteine 334/cysteine 349, cysteine 336/cysteine 346, and cysteine 341/cysteine 342. Residue serine 223 is the site of O-palmitoleoyl serine; by PORCN attachment. N-linked (GlcNAc...) asparagine glycosylation is found at asparagine 291 and asparagine 305.

The protein belongs to the Wnt family. As to quaternary structure, interacts with PORCN. Palmitoleoylation is required for efficient binding to frizzled receptors. Depalmitoleoylation leads to Wnt signaling pathway inhibition.

It is found in the secreted. The protein resides in the extracellular space. The protein localises to the extracellular matrix. Functionally, ligand for members of the frizzled family of seven transmembrane receptors. Probable developmental protein. May be a signaling molecule which affects the development of discrete regions of tissues. Is likely to signal over only few cell diameters. The protein is Protein Wnt-5b (WNT5B) of Homo sapiens (Human).